The following is an 845-amino-acid chain: Envelope glycoprotein B (845 aa).

The signal sequence occupies residues 1 to 26 (MTPRSRLATLGTVILLVCFCAGAAHS). The Virion surface portion of the chain corresponds to 27 to 732 (RGDTFQTSSS…TGFINFIKHP (706 aa)). The tract at residues 29-57 (DTFQTSSSPTPPGSSSKAPTKPGEEASGP) is disordered. Positions 33-49 (TSSSPTPPGSSSKAPTK) are enriched in low complexity. Disulfide bonds link cysteine 68–cysteine 528, cysteine 85–cysteine 484, cysteine 157–cysteine 222, cysteine 315–cysteine 362, and cysteine 550–cysteine 587. An involved in fusion and/or binding to host membrane region spans residues 124–130 (VYRGLTE). The N-linked (GlcNAc...) asparagine; by host glycan is linked to asparagine 179. The segment at 208–216 (GWFPGIYRV) is involved in fusion and/or binding to host membrane. N-linked (GlcNAc...) asparagine; by host glycans are attached at residues asparagine 254, asparagine 275, asparagine 355, asparagine 368, asparagine 372, asparagine 385, and asparagine 408. The segment at 411–451 (HAQGDSGNPTSSPPPSASPMTTSASRRKRRSASTAAAGGGG) is disordered. N-linked (GlcNAc...) asparagine; by host glycans are attached at residues asparagine 455, asparagine 562, asparagine 599, asparagine 614, and asparagine 628. The tract at residues 678 to 730 (LDNTIDMNKERFVRDLSEIVADLGGIGKTVVNVASSVVTLCGSLVTGFINFIK) is hydrophobic membrane proximal region. The chain crosses the membrane as a helical span at residues 733–753 (LGGMLMIIIVIAIILIIFMLS). At 754–845 (RRTNTIAQAP…SLDISPETGE (92 aa)) the chain is on the intravirion side. The interval 802-845 (RQKADDLKKSTPSVFQRTANGLRQRLRGYKPLTQSLDISPETGE) is disordered. The segment covering 811-822 (STPSVFQRTANG) has biased composition (polar residues). Residues 830 to 833 (YKPL) carry the Internalization motif motif.

This sequence belongs to the herpesviridae glycoprotein B family. Homotrimer; disulfide-linked. Binds to heparan sulfate proteoglycans. Interacts with gH/gL heterodimer. Interacts with host ITGAV-ITGB3; this interaction mediates viral entry. In terms of processing, a proteolytic cleavage by host furin generates two subunits that remain linked by disulfide bonds.

The protein localises to the virion membrane. It localises to the host cell membrane. It is found in the host endosome membrane. The protein resides in the host Golgi apparatus membrane. Envelope glycoprotein that forms spikes at the surface of the virion envelope. Participates in viral entry through an RGD motif that binds ITGAV-ITGB3. Membrane fusion is mediated by the fusion machinery composed at least of gB and the heterodimer gH/gL. May be involved in the fusion between the virion envelope and the outer nuclear membrane during virion egress. This is Envelope glycoprotein B from Homo sapiens (Human).